Reading from the N-terminus, the 350-residue chain is Bifunctional methylenetetrahydrofolate dehydrogenase/cyclohydrolase, mitochondrial (350 aa).

The N-terminal 35 residues, methionine 1–asparagine 35, are a transit peptide targeting the mitochondrion. Position 50 is an N6-acetyllysine; alternate (lysine 50). Lysine 50 is covalently cross-linked (Glycyl lysine isopeptide (Lys-Gly) (interchain with G-Cter in SUMO2); alternate). Substrate is bound by residues tyrosine 84–lysine 88 and valine 131–leucine 133. Residues glycine 200–serine 202 and arginine 233 contribute to the NAD(+) site. Proline 309–glycine 313 is a substrate binding site.

Belongs to the tetrahydrofolate dehydrogenase/cyclohydrolase family. In terms of assembly, homodimer. Mg(2+) serves as cofactor.

The protein localises to the mitochondrion. It catalyses the reaction (6R)-5,10-methylene-5,6,7,8-tetrahydrofolate + NAD(+) = (6R)-5,10-methenyltetrahydrofolate + NADH. The enzyme catalyses (6R)-5,10-methenyltetrahydrofolate + H2O = (6R)-10-formyltetrahydrofolate + H(+). In terms of biological role, although its dehydrogenase activity is NAD-specific, it can also utilize NADP at a reduced efficiency. In Bos taurus (Bovine), this protein is Bifunctional methylenetetrahydrofolate dehydrogenase/cyclohydrolase, mitochondrial (MTHFD2).